The primary structure comprises 338 residues: TPR repeat-containing protein MJ0941 (338 aa).

TPR repeat units follow at residues 27–62 (LEAVANVLRAYRELFEGNLIKALYYVDKALELEPDF), 63–96 (YLALFLKGLALSAKGEIKEAITTFEELLSYESKN), 97–130 (PITWVFVGQLYGMSGNCDEALKCYNKALGIENRF), 131–164 (LSAFLLKTICLEFLGEYDELLKCYNEVLTYTPNF), 165–198 (VPMWVKKAEILRKLGRYEDALLCLNRALELKPHD), 199–232 (KNALYLKGVLLKRMGKFREALECFKKLIDELNVK), 268–301 (VALWYFKGELYERLGKLDEALKCYEKVIELQPHY), and 302–335 (IKALLSKARIYERQGNIEAAIEYYNKAVENIHKD).

The sequence is that of TPR repeat-containing protein MJ0941 from Methanocaldococcus jannaschii (strain ATCC 43067 / DSM 2661 / JAL-1 / JCM 10045 / NBRC 100440) (Methanococcus jannaschii).